We begin with the raw amino-acid sequence, 368 residues long: Alanine racemase (368 aa).

The active-site Proton acceptor; specific for D-alanine is Lys40. Residue Lys40 is modified to N6-(pyridoxal phosphate)lysine. Arg136 is a substrate binding site. The active-site Proton acceptor; specific for L-alanine is the Tyr263. Substrate is bound at residue Met310.

The protein belongs to the alanine racemase family. Pyridoxal 5'-phosphate is required as a cofactor.

It catalyses the reaction L-alanine = D-alanine. It participates in amino-acid biosynthesis; D-alanine biosynthesis; D-alanine from L-alanine: step 1/1. Functionally, catalyzes the interconversion of L-alanine and D-alanine. May also act on other amino acids. The chain is Alanine racemase (alr) from Streptococcus uberis (strain ATCC BAA-854 / 0140J).